We begin with the raw amino-acid sequence, 157 residues long: MPRRGVVERRPIPPDARYNSVLVQKFINKVMERGKKSLAERIVYQALDLAAEKLKKPQLEIFEQALRNASPSIEVKPKRVGGATYQVPVEVKSDRRYSLAMRWLIMSARARTGKPMVERLAAELIDAYNNTGTTIKRKEDVHRMAEANRAFAHYGRL.

Belongs to the universal ribosomal protein uS7 family. Part of the 30S ribosomal subunit. Contacts proteins S9 and S11.

One of the primary rRNA binding proteins, it binds directly to 16S rRNA where it nucleates assembly of the head domain of the 30S subunit. Is located at the subunit interface close to the decoding center, probably blocks exit of the E-site tRNA. The sequence is that of Small ribosomal subunit protein uS7 from Chloroflexus aggregans (strain MD-66 / DSM 9485).